Reading from the N-terminus, the 320-residue chain is 4-hydroxythreonine-4-phosphate dehydrogenase (320 aa).

Threonine 132 is a binding site for substrate. 3 residues coordinate a divalent metal cation: histidine 161, histidine 205, and histidine 258. Lysine 266, asparagine 275, and arginine 284 together coordinate substrate.

This sequence belongs to the PdxA family. Homodimer. A divalent metal cation serves as cofactor.

The protein resides in the cytoplasm. The catalysed reaction is 4-(phosphooxy)-L-threonine + NAD(+) = 3-amino-2-oxopropyl phosphate + CO2 + NADH. It functions in the pathway cofactor biosynthesis; pyridoxine 5'-phosphate biosynthesis; pyridoxine 5'-phosphate from D-erythrose 4-phosphate: step 4/5. Functionally, catalyzes the NAD(P)-dependent oxidation of 4-(phosphooxy)-L-threonine (HTP) into 2-amino-3-oxo-4-(phosphooxy)butyric acid which spontaneously decarboxylates to form 3-amino-2-oxopropyl phosphate (AHAP). The polypeptide is 4-hydroxythreonine-4-phosphate dehydrogenase (Aquifex aeolicus (strain VF5)).